Consider the following 236-residue polypeptide: Sperm flagellar protein 1 (236 aa).

Residues 7 to 112 (EEALHQLYLW…VLIPLRQRLE (106 aa)) enclose the Calponin-homology (CH) domain. The segment at 118 to 177 (RKQGIGSLQELAPQDGTDYMDVGLSQKARGEGVPDPQGRGQLREGRLPVPRPPGDSQALQ) is disordered. Positions 183–236 (ILQIAEKEQELLASQETVQVLQMKVRRLEHLLQLKNVRIEDLSRRLQQAERKQR) are essential for homodimerization and microtubule bundling activity.

Homodimer. Interacts with actin, TJP1, CGN and CDH1.

Its subcellular location is the cytoplasm. It is found in the cell projection. The protein resides in the cilium. The protein localises to the flagellum. It localises to the cytoskeleton. Its subcellular location is the cilium axoneme. It is found in the apical cell membrane. The protein resides in the basolateral cell membrane. The protein localises to the stress fiber. It localises to the microvillus. Its subcellular location is the lamellipodium. It is found in the filopodium. Its function is as follows. Microtubule-associated protein involved in the stabilization of microtubules along the axis of migration during radial intercalation. Promotes the establishment and stabilization of an axis of microtubules required for the active migration of cells into the outer epithelium. Microtubule-associated protein that promotes microtubule bundling and stabilizes microtubules against depolymerization in response to cold shock. Essential for ciliary central apparatus formation which requires both its microtubule-binding and bundling activities and for ciliary localization of HYDIN and SPAG6 in ependymal cilia. Binds actin in intestinal epithelial cells (IECs), essential for IECs survival and contributes to formation of filopodia and lamellipodia in migrating IECs. Regulates planar cell polarity signaling pathway and asymmetric microtubule accumulation in ciliated epithelia. The protein is Sperm flagellar protein 1 (SPEF1) of Bos taurus (Bovine).